Consider the following 405-residue polypeptide: Argininosuccinate synthase (405 aa).

ATP is bound by residues 12–20 (AYSGGLDTS) and Ala40. L-citrulline contacts are provided by Tyr92 and Ser97. Gly122 contributes to the ATP binding site. Positions 124, 128, and 129 each coordinate L-aspartate. Asn128 contributes to the L-citrulline binding site. The L-citrulline site is built by Arg132, Ser181, Ser190, Glu266, and Tyr278.

The protein belongs to the argininosuccinate synthase family. Type 1 subfamily. As to quaternary structure, homotetramer.

The protein resides in the cytoplasm. The enzyme catalyses L-citrulline + L-aspartate + ATP = 2-(N(omega)-L-arginino)succinate + AMP + diphosphate + H(+). It participates in amino-acid biosynthesis; L-arginine biosynthesis; L-arginine from L-ornithine and carbamoyl phosphate: step 2/3. In Edwardsiella ictaluri (strain 93-146), this protein is Argininosuccinate synthase.